The primary structure comprises 317 residues: MSAPETTAPLQPPAAQAASLPGSLAESLASSGITELLAQLDRELIGLKPVKARIRDIAALLLVDKLRAARGFSAGAPSLHMCFTGNPGTGKTTVAMRMAQILHQLGYVRRGHLVAVTRDDLVGQYIGHTAPKTKEILKKALGGVLFIDEAYYLYRPENERDYGQEAIEILLQVMENNRDDLVVILAGYKDRMDRFFESNPGMSSRVAHHVDFPDYQLDELRQIADLMLAEMQYRFDDESRAVFADYLARRMAQPHFANARSVRNALDRARLRHASRLLDDAGTVADDRTLTTITASDLLASRVFSKAAPAAQTPAKE.

85 to 92 (GNPGTGKT) is an ATP binding site.

The protein belongs to the CbxX/CfxQ family.

Its function is as follows. Seems to be necessary for the expression of RuBisCO. The polypeptide is Protein CbxX, plasmid (cbxXP) (Cupriavidus necator (strain ATCC 17699 / DSM 428 / KCTC 22496 / NCIMB 10442 / H16 / Stanier 337) (Ralstonia eutropha)).